Here is a 365-residue protein sequence, read N- to C-terminus: Eukaryotic translation initiation factor 3 subunit H (365 aa).

The region spanning 11-160 is the MPN domain; sequence VKVDALVVMK…LRAFRLSSKF (150 aa).

Belongs to the eIF-3 subunit H family. In terms of assembly, component of the eukaryotic translation initiation factor 3 (eIF-3) complex.

It is found in the cytoplasm. Component of the eukaryotic translation initiation factor 3 (eIF-3) complex, which is involved in protein synthesis of a specialized repertoire of mRNAs and, together with other initiation factors, stimulates binding of mRNA and methionyl-tRNAi to the 40S ribosome. The eIF-3 complex specifically targets and initiates translation of a subset of mRNAs involved in cell proliferation. In Aspergillus oryzae (strain ATCC 42149 / RIB 40) (Yellow koji mold), this protein is Eukaryotic translation initiation factor 3 subunit H.